Consider the following 39-residue polypeptide: MTRTAVLLLTLLFLVAMAASDKIKTRELCWSERECENGK.

The signal sequence occupies residues 1-20; sequence MTRTAVLLLTLLFLVAMAAS. C29 and C35 are joined by a disulfide.

In terms of tissue distribution, expressed by the venom duct.

It is found in the secreted. Probable neurotoxin. The chain is Contryphan-Cal3 from Californiconus californicus (California cone).